Reading from the N-terminus, the 99-residue chain is Small ribosomal subunit protein bS18 (99 aa).

This sequence belongs to the bacterial ribosomal protein bS18 family. As to quaternary structure, part of the 30S ribosomal subunit. Forms a tight heterodimer with protein bS6.

Its function is as follows. Binds as a heterodimer with protein bS6 to the central domain of the 16S rRNA, where it helps stabilize the platform of the 30S subunit. The sequence is that of Small ribosomal subunit protein bS18 from Christiangramia forsetii (strain DSM 17595 / CGMCC 1.15422 / KT0803) (Gramella forsetii).